The chain runs to 160 residues: FMRFamide-like neuropeptides 13 (160 aa).

The first 17 residues, 1–17 (MMTSLLTISMFVVAIQA), serve as a signal peptide directing secretion. Residues 18–43 (FDSSEIRMLDEQYDTKNPFFQFLENS) constitute a propeptide that is removed on maturation. Residues phenylalanine 60, phenylalanine 73, phenylalanine 85, phenylalanine 98, phenylalanine 110, phenylalanine 123, phenylalanine 135, phenylalanine 146, and phenylalanine 157 each carry the phenylalanine amide modification.

It belongs to the FARP (FMRFamide related peptide) family. Expressed in the ASE sensory neurons, the DD motor neurons, the 15, M3 and M5 cholinergic pharyngeal motoneurons, and the ASG, ASK and BAG neurons.

Its subcellular location is the secreted. In terms of biological role, probable FMRFamide-like neuropeptides. Binds to neuronal receptors such as dmsr-1 to promote sleep in response to cellular stress also known as stress-induced sleep (SIS). Plays a role in behaviors associated with SIS, acting in concert with the FMRFamide related peptide, flp-24 and neuropeptide-like protein nlp-8. Functionally, AADGAPLIRF-amide: Inhibits muscle tension in somatic muscle. Acts as a ligand for the npr-22 receptor in vitro. Acts as a ligand for isoform a of the dmsr-1 G-protein coupled receptor in vitro. APEASPFIRF-amide: Inhibits muscle tension in somatic muscle. Potent inhibitor of the activity of the dissected pharyngeal myogenic muscle system. Acts as a ligand for isoform a of the dmsr-1 G-protein coupled receptor in vitro. Its function is as follows. Acts as a ligand for the npr-22 receptor in vitro. Acts as a ligand for isoform a of the dmsr-1 G-protein coupled receptor in vitro. In terms of biological role, acts as a ligand for isoform a of the dmsr-1 G-protein coupled receptor in vitro. The protein is FMRFamide-like neuropeptides 13 of Caenorhabditis elegans.